A 433-amino-acid chain; its full sequence is 26S proteasome regulatory subunit 7 (433 aa).

The tract at residues Met1–Arg23 is disordered. The segment covering Asp8–Arg23 has biased composition (basic and acidic residues). Gly216–Thr223 is an ATP binding site.

This sequence belongs to the AAA ATPase family. Post-translationally, phosphorylated. Dephosphorylated by ublcp1 which impairs psmc2 ATPase activity and disrupts 26S proteasome assembly.

It is found in the cytoplasm. The protein resides in the nucleus. Its function is as follows. The 26S proteasome is involved in the ATP-dependent degradation of ubiquitinated proteins. The regulatory (or ATPase) complex confers ATP dependency and substrate specificity to the 26S complex. This is 26S proteasome regulatory subunit 7 (psmc2) from Xenopus laevis (African clawed frog).